Here is a 206-residue protein sequence, read N- to C-terminus: 2,3-bisphosphoglycerate-dependent phosphoglycerate mutase (206 aa).

Residues 9–16 (RHGQSEWN), 22–23 (TG), Arg61, 88–91 (ERDY), Lys99, 115–116 (RR), and 159–160 (GN) each bind substrate. His10 serves as the catalytic Tele-phosphohistidine intermediate. The active-site Proton donor/acceptor is Glu88.

This sequence belongs to the phosphoglycerate mutase family. BPG-dependent PGAM subfamily. Homodimer.

It catalyses the reaction (2R)-2-phosphoglycerate = (2R)-3-phosphoglycerate. It participates in carbohydrate degradation; glycolysis; pyruvate from D-glyceraldehyde 3-phosphate: step 3/5. Its function is as follows. Catalyzes the interconversion of 2-phosphoglycerate and 3-phosphoglycerate. The polypeptide is 2,3-bisphosphoglycerate-dependent phosphoglycerate mutase (Brucella abortus (strain S19)).